A 258-amino-acid polypeptide reads, in one-letter code: F-box/SPRY domain-containing protein 1 (258 aa).

Residues Met-6 to Gln-54 enclose the F-box domain. Positions Phe-64–Leu-256 constitute a B30.2/SPRY domain.

The protein belongs to the FBXO45/Fsn family. As to quaternary structure, component of an E3 ubiquitin ligase complex composed of hiw and Fsn.

The protein resides in the synapse. It functions in the pathway protein modification; protein ubiquitination. Its function is as follows. Required in the presynaptic motoneuron to down-regulate the levels of wnd and restrain synaptic terminal growth at the neuromuscular junction (NMJ). This is F-box/SPRY domain-containing protein 1 from Anopheles gambiae (African malaria mosquito).